We begin with the raw amino-acid sequence, 476 residues long: Bifunctional protein GlmU (476 aa).

Residues 1–232 (MDNLAAIILA…PVEVMGINDR (232 aa)) are pyrophosphorylase. Residues 9 to 12 (LAAG), lysine 23, glutamine 75, and 80 to 81 (GT) contribute to the UDP-N-acetyl-alpha-D-glucosamine site. Aspartate 105 provides a ligand contact to Mg(2+). Residues glycine 142, glutamate 157, asparagine 172, and asparagine 230 each contribute to the UDP-N-acetyl-alpha-D-glucosamine site. A Mg(2+)-binding site is contributed by asparagine 230. Residues 233 to 253 (VQLAEAARHARRRIAEEHMLN) are linker. An N-acetyltransferase region spans residues 254-476 (GVTLVDPAAT…EGWKLRKRDQ (223 aa)). Positions 353 and 371 each coordinate UDP-N-acetyl-alpha-D-glucosamine. Histidine 383 serves as the catalytic Proton acceptor. Residues tyrosine 386 and asparagine 397 each contribute to the UDP-N-acetyl-alpha-D-glucosamine site. Acetyl-CoA is bound by residues 406–407 (NY), serine 425, alanine 443, and arginine 460.

In the N-terminal section; belongs to the N-acetylglucosamine-1-phosphate uridyltransferase family. The protein in the C-terminal section; belongs to the transferase hexapeptide repeat family. In terms of assembly, homotrimer. Mg(2+) serves as cofactor.

The protein resides in the cytoplasm. It catalyses the reaction alpha-D-glucosamine 1-phosphate + acetyl-CoA = N-acetyl-alpha-D-glucosamine 1-phosphate + CoA + H(+). It carries out the reaction N-acetyl-alpha-D-glucosamine 1-phosphate + UTP + H(+) = UDP-N-acetyl-alpha-D-glucosamine + diphosphate. Its pathway is nucleotide-sugar biosynthesis; UDP-N-acetyl-alpha-D-glucosamine biosynthesis; N-acetyl-alpha-D-glucosamine 1-phosphate from alpha-D-glucosamine 6-phosphate (route II): step 2/2. The protein operates within nucleotide-sugar biosynthesis; UDP-N-acetyl-alpha-D-glucosamine biosynthesis; UDP-N-acetyl-alpha-D-glucosamine from N-acetyl-alpha-D-glucosamine 1-phosphate: step 1/1. It functions in the pathway bacterial outer membrane biogenesis; LPS lipid A biosynthesis. In terms of biological role, catalyzes the last two sequential reactions in the de novo biosynthetic pathway for UDP-N-acetylglucosamine (UDP-GlcNAc). The C-terminal domain catalyzes the transfer of acetyl group from acetyl coenzyme A to glucosamine-1-phosphate (GlcN-1-P) to produce N-acetylglucosamine-1-phosphate (GlcNAc-1-P), which is converted into UDP-GlcNAc by the transfer of uridine 5-monophosphate (from uridine 5-triphosphate), a reaction catalyzed by the N-terminal domain. The protein is Bifunctional protein GlmU of Geobacter sulfurreducens (strain ATCC 51573 / DSM 12127 / PCA).